We begin with the raw amino-acid sequence, 429 residues long: 3-phosphoshikimate 1-carboxyvinyltransferase (429 aa).

Residues Lys21, Ser22, and Arg26 each contribute to the 3-phosphoshikimate site. Lys21 serves as a coordination point for phosphoenolpyruvate. The phosphoenolpyruvate site is built by Gly94 and Arg122. Residues Ser167, Gln169, Asp315, and Lys342 each coordinate 3-phosphoshikimate. Gln169 is a phosphoenolpyruvate binding site. The Proton acceptor role is filled by Asp315. Phosphoenolpyruvate contacts are provided by Arg346 and Arg388.

This sequence belongs to the EPSP synthase family. As to quaternary structure, monomer.

Its subcellular location is the cytoplasm. The enzyme catalyses 3-phosphoshikimate + phosphoenolpyruvate = 5-O-(1-carboxyvinyl)-3-phosphoshikimate + phosphate. Its pathway is metabolic intermediate biosynthesis; chorismate biosynthesis; chorismate from D-erythrose 4-phosphate and phosphoenolpyruvate: step 6/7. Catalyzes the transfer of the enolpyruvyl moiety of phosphoenolpyruvate (PEP) to the 5-hydroxyl of shikimate-3-phosphate (S3P) to produce enolpyruvyl shikimate-3-phosphate and inorganic phosphate. The polypeptide is 3-phosphoshikimate 1-carboxyvinyltransferase (Desulforudis audaxviator (strain MP104C)).